The chain runs to 234 residues: MKKALVVFSGGQDSTTCAALACREYDEVHAVTFEYNQRHAIELESARAVGQALGLTGHEFIRLGPLLKGTSPLVSDAPLGQYASAAELPAGVEPTFVPGRNILFLTLAANRAFCLGTGDIVIGVCEADFAGYWDCRQVFVEAMARALGEGIYGDANAIRIHTPLMRLTKAETVKLSVEVLGERFEEVLALSHTCYAGVRGGCGRCHACILRDRGFREAGVPDPIWKFRKEPVSL.

8-18 lines the ATP pocket; the sequence is FSGGQDSTTCA. Residues C194, C202, C205, and C208 each coordinate Zn(2+).

It belongs to the QueC family. It depends on Zn(2+) as a cofactor.

The enzyme catalyses 7-carboxy-7-deazaguanine + NH4(+) + ATP = 7-cyano-7-deazaguanine + ADP + phosphate + H2O + H(+). Its pathway is purine metabolism; 7-cyano-7-deazaguanine biosynthesis. Catalyzes the ATP-dependent conversion of 7-carboxy-7-deazaguanine (CDG) to 7-cyano-7-deazaguanine (preQ(0)). This is 7-cyano-7-deazaguanine synthase from Gloeobacter violaceus (strain ATCC 29082 / PCC 7421).